A 249-amino-acid polypeptide reads, in one-letter code: Vesicle-associated membrane protein-associated protein A (249 aa).

Position 2 is an N-acetylalanine (Ala-2). Topologically, residues 2–227 (ASASGTMAKH…VSFRENVTSP (226 aa)) are cytoplasmic. In terms of domain architecture, MSP spans 14 to 131 (ILVLDPPTDL…MDSKLRCVFE (118 aa)). Residues 50-53 (KVKT) are phosphorylated FFAT motif binding. N6-acetyllysine is present on Lys-125. Ser-166 carries the phosphoserine modification. The stretch at 169–205 (DTETRKLVEECKRLQGEMMKLSEENRLLRDEGLRLRK) forms a coiled coil. The residue at position 170 (Thr-170) is a Phosphothreonine. Ser-214, Ser-216, and Ser-219 each carry phosphoserine. A helical; Anchor for type IV membrane protein transmembrane segment spans residues 228–248 (LPSLLVVIAAIFIGFFLGKFI).

This sequence belongs to the VAMP-associated protein (VAP) (TC 9.B.17) family. As to quaternary structure, homodimer; disulfide-linked. Heterodimer with VAPB. Interacts with VAMP1, VAMP2, STX1A, BET1, SEC22C and with the C-terminal domain of OCLN. Interacts (via MSP domain) with OSBPL1A (via FFAT motif). Interacts (via MSP domain) with ZFYVE27; may retain ZFYVE27 in the endoplasmic reticulum and regulate its function in cell projections formation. Interacts with OSBP. Interacts (via C-terminus) with RSAD2/viperin (via C-terminus). Interacts with IFITM3. Interacts with OSBPL3 (phosphorylated form). Interacts with KIF5A in a ZFYVE27-dependent manner. Interacts (via MSP domain) with STARD3 (via phosphorylated FFAT motif); this interaction recruits VAPA to the endosome. Interacts with STARD3NL (via FFAT motif). Interacts with CERT1. Interacts with PLEKHA3 and SACM1L to form a ternary complex. Interacts with VPS13A (via FFAT motif). Interacts with RB1CC1 (via phosphorylated FFAT motif), MIGA2 (via phosphorylated FFAT motif), RMDN3 (via phosphorylated FFAT motif), KCNB1 (via phosphorylated FFAT motif) and KCNB2 (via phosphorylated FFAT motif). Interacts (via MSP domain) with WDR44 (via FFAT-like motif); the interactions connect the endoplasmic reticulum (ER) with the endosomal tubule.

The protein localises to the endoplasmic reticulum membrane. It is found in the cell junction. Its subcellular location is the tight junction. It localises to the cell membrane. In terms of biological role, endoplasmic reticulum (ER)-anchored protein that mediates the formation of contact sites between the ER and endosomes via interaction with FFAT motif-containing proteins such as STARD3 or WDR44. STARD3-VAPA interaction enables cholesterol transfer from the ER to endosomes. Via interaction with WDR44 participates in neosynthesized protein export. In addition, recruited to the plasma membrane through OSBPL3 binding. The OSBPL3-VAPA complex stimulates RRAS signaling which in turn attenuates integrin beta-1 (ITGB1) activation at the cell surface. With OSBPL3, may regulate ER morphology. May play a role in vesicle trafficking. In Bos taurus (Bovine), this protein is Vesicle-associated membrane protein-associated protein A.